Consider the following 177-residue polypeptide: Austinoid biosynthesis clusters protein F (177 aa).

The protein belongs to the trt14 isomerase family. Homodimer.

Its pathway is secondary metabolite biosynthesis; terpenoid biosynthesis. Its function is as follows. Part of the gene cluster B that mediates the biosynthesis of austinol and dehydroaustinol, two fungal meroterpenoids. The first step of the pathway is the synthesis of 3,5-dimethylorsellinic acid by the polyketide synthase ausA. 3,5-dimethylorsellinic acid is then prenylated by the polyprenyl transferase ausN. Further epoxidation by the FAD-dependent monooxygenase ausM and cyclization by the probable terpene cyclase ausL lead to the formation of protoaustinoid A. Protoaustinoid A is then oxidized to spiro-lactone preaustinoid A3 by the combined action of the FAD-binding monooxygenases ausB and ausC, and the dioxygenase ausE. Acid-catalyzed keto-rearrangement and ring contraction of the tetraketide portion of preaustinoid A3 by ausJ lead to the formation of preaustinoid A4. The aldo-keto reductase ausK, with the help of ausH, is involved in the next step by transforming preaustinoid A4 into isoaustinone which is in turn hydroxylated by the P450 monooxygenase ausI to form austinolide. Finally, the cytochrome P450 monooxygenase ausG modifies austinolide to austinol. Austinol can be further modified to dehydroaustinol which forms a diffusible complex with diorcinol that initiates conidiation. Due to genetic rearrangements of the clusters and the subsequent loss of some enzymes, the end products of the Emericella nidulans austinoid biosynthesis clusters are austinol and dehydroaustinol, even if additional enzymes, such as the O-acetyltransferase ausQ and the cytochrome P450 monooxygenase ausR are still functional. This is Austinoid biosynthesis clusters protein F from Emericella nidulans (strain FGSC A4 / ATCC 38163 / CBS 112.46 / NRRL 194 / M139) (Aspergillus nidulans).